A 225-amino-acid polypeptide reads, in one-letter code: MESFEKLETLLGYSFKNKELLIEALSHPSLRQYHEYKYDKDYERLEFLGDAVLNLLITEILFKNFENYKEGNLAKIRSYLVCKETICIVGTKLALKDYIIMTHGEEVAGGRDNPNNIENATEALIAAIYLDSNIEITHNIIEKLWAEFMKVQNLTDYDPKTALQEWAQANSHHLPIYRLIKREGAAHSSIFTVLVKVKDYEQTCTGYSIKEAEKKAARSLLHRLK.

Residues 4 to 133 (FEKLETLLGY…LIAAIYLDSN (130 aa)) form the RNase III domain. Mg(2+) is bound at residue Glu-46. Asp-50 is an active-site residue. Mg(2+) is bound by residues Asn-119 and Glu-122. Glu-122 is a catalytic residue. In terms of domain architecture, DRBM spans 158-225 (DPKTALQEWA…AARSLLHRLK (68 aa)).

It belongs to the ribonuclease III family. In terms of assembly, homodimer. Requires Mg(2+) as cofactor.

It localises to the cytoplasm. The enzyme catalyses Endonucleolytic cleavage to 5'-phosphomonoester.. Functionally, digests double-stranded RNA. Involved in the processing of primary rRNA transcript to yield the immediate precursors to the large and small rRNAs (23S and 16S). Processes some mRNAs, and tRNAs when they are encoded in the rRNA operon. Processes pre-crRNA and tracrRNA of type II CRISPR loci if present in the organism. This Rickettsia prowazekii (strain Madrid E) protein is Ribonuclease 3.